The chain runs to 736 residues: Catalase-peroxidase (736 aa).

Residues 1–30 form a disordered region; it reads MGGNVMTDDKMNSVTSGANKQETGRDMSNR. Residues 12–21 are compositionally biased toward polar residues; it reads NSVTSGANKQ. A cross-link (tryptophyl-tyrosyl-methioninium (Trp-Tyr) (with M-250)) is located at residues 101-224; it reads WHSAGTYRAG…LAAVQMGLIY (124 aa). His102 (proton acceptor) is an active-site residue. The tryptophyl-tyrosyl-methioninium (Tyr-Met) (with W-101) cross-link spans 224-250; the sequence is YVNPEGPNGNPDPIAAAKDIREVFARM. Heme b is bound at residue His265. Residues 351 to 373 form a disordered region; the sequence is KGGAGAGTIPDAHDPSKRHAPSM.

It belongs to the peroxidase family. Peroxidase/catalase subfamily. As to quaternary structure, homodimer or homotetramer. Heme b serves as cofactor. Formation of the three residue Trp-Tyr-Met cross-link is important for the catalase, but not the peroxidase activity of the enzyme.

It catalyses the reaction H2O2 + AH2 = A + 2 H2O. It carries out the reaction 2 H2O2 = O2 + 2 H2O. Functionally, bifunctional enzyme with both catalase and broad-spectrum peroxidase activity. This Methanosarcina acetivorans (strain ATCC 35395 / DSM 2834 / JCM 12185 / C2A) protein is Catalase-peroxidase.